Reading from the N-terminus, the 392-residue chain is MLRWLTAGESHGPALVAVLEGLPAGVEITTSVLGDALARRRMGYGRGARMTFERDEVEFLGGIRHGVTMGGPVAIRIANTEWPKWREVMAADPVPPEQLADLARAAPLTRPRPGHADLVGMQKYHLTDIRPILERASARETAARVALGTVAAAFLRQAAGIEVLSHVVAIGPVCAPAEPLPTPADRERIDADPVRCLDPQASAAMVAEIDAAKKDGDTLGGVVEVLGYGLPPGLGSHVHWDRRLDARLAAALMSIQAIKGVEVGDGFATARRRGSAAHDEIEAGADGVRRRTNRSGGTEGGMSTGEVLRVRAAMKPISTVPRALDTIDVTTGEPAKAINQRSDVCAVPAAGVVAEAMVELVLADALLEKFGGDHVVETRRNLQAYLDTLVVR.

NADP(+) contacts are provided by Arg-40 and Arg-46. FMN contacts are provided by residues 135 to 137 (RAS), 256 to 257 (QA), Gly-300, 315 to 319 (KPIST), and Arg-341.

This sequence belongs to the chorismate synthase family. In terms of assembly, homotetramer. Requires FMNH2 as cofactor.

The catalysed reaction is 5-O-(1-carboxyvinyl)-3-phosphoshikimate = chorismate + phosphate. It participates in metabolic intermediate biosynthesis; chorismate biosynthesis; chorismate from D-erythrose 4-phosphate and phosphoenolpyruvate: step 7/7. Functionally, catalyzes the anti-1,4-elimination of the C-3 phosphate and the C-6 proR hydrogen from 5-enolpyruvylshikimate-3-phosphate (EPSP) to yield chorismate, which is the branch point compound that serves as the starting substrate for the three terminal pathways of aromatic amino acid biosynthesis. This reaction introduces a second double bond into the aromatic ring system. This Acidothermus cellulolyticus (strain ATCC 43068 / DSM 8971 / 11B) protein is Chorismate synthase.